The chain runs to 973 residues: MSGIGNKRAAGEPGTSMPPEKKTAVEDSGTTVETIKLGGVSSTEELDIRTLQSKNRKLAEMLDQRQAIEDELREHIEKLERRQATDDASLLIVNRYWSQFDENIRIILKRYDLDQGLGDLLTERKALVVPEPEPDSDSNQERKDDRERGDGQEPAFSFLATLASSSSEEMESQLQERVESSRRAVSQIVTVYDKLQEKVDLLSRKLNSGDNLIVEEAVQELNSFLAQENVRLQELTDLLQEKHHTMSQEFCKLQGKVETAESRVSVLESMIDDLQWDIDKIRKREQRLNRHLAEVLERVNSKGYKVYGAGSSLYGGTITINARKFEEMNAELEENKELAQNRHCELEKLRQDFEEVTTQNEKLKVELRSAVEEVVKETPEYRCMQSQFSVLYNESLQLKAHLDEARTLLHGTRGTHQRQVELIERDEVSLHKKLRTEVIQLEDTLAQVRKEYEMLRIEFEQTLAANEQAGPINREMRHLISSLQNHNHQLKGEVLRYKRKLREAQSDLNKTRLRSGSALLQSQSSTEDPKDEPTELKQDSEDLATHSSALKASQEDEVKSKRDEEERERERREKEREREREREKEKEREREKQKLKESEKERDSVKDKEKGKHDDGRKKEAEIIKQLKIELKKAQESQKEMKLLLDMYRSAPKEQRDKVQLMAAEKKSKAELEDLRQRLKDLEDKEKKENKKMADEDALRKIRAVEEQIEYLQKKLAMAKQEEEALLSEMDVTGQAFEDMQEQNIRLMQQLREKDDANFKLMSERIKSNQIHKLLKEEKEELADQVLTLKTQVDAQLQVVRKLEEKEHLLQSNIGTGEKELGLRTQALEMNKRKAMEAAQLADDLKAQLELAQKKLHDFQDEIVENSVTKEKDLFNFKRAQEDISRLRRKLETTKKPDNVPKCDEILMEEIKDYKARLTCPCCNMRKKDAVLTKCFHVFCFECVKTRYDTRQRKCPKCNAAFGANDFHRIYIG.

Residues 1 to 37 are disordered; that stretch reads MSGIGNKRAAGEPGTSMPPEKKTAVEDSGTTVETIKL. Lys21 bears the N6-acetyllysine mark. Ser41 carries the phosphoserine modification. Positions 43–90 form a coiled coil; that stretch reads TEELDIRTLQSKNRKLAEMLDQRQAIEDELREHIEKLERRQATDDASL. The segment at 128-153 is disordered; the sequence is VVPEPEPDSDSNQERKDDRERGDGQE. A phosphoserine mark is found at Ser136 and Ser138. Residues 139-151 are compositionally biased toward basic and acidic residues; sequence NQERKDDRERGDG. Coiled-coil stretches lie at residues 168 to 378 and 429 to 896; these read EEME…VKET and SLHK…TTKK. Residues Lys348 and Lys510 each carry the N6-acetyllysine modification. The segment at 507–620 is disordered; sequence DLNKTRLRSG…GKHDDGRKKE (114 aa). Ser522 is modified (phosphoserine). 2 stretches are compositionally biased toward basic and acidic residues: residues 527–544 and 553–620; these read EDPK…EDLA and SQED…RKKE. Ser560 bears the Phosphoserine mark. An RING-type zinc finger spans residues 920-959; it reads CPCCNMRKKDAVLTKCFHVFCFECVKTRYDTRQRKCPKCN.

This sequence belongs to the BRE1 family. Component of the RNF20/40 complex (also known as BRE1 complex) probably composed of 2 copies of RNF20/BRE1A and 2 copies of RNF40/BRE1B. Interacts with UBE2E1/UBCH6. Interacts with p53/TP53 and WAC. Interacts with PAF1; the interaction mediates the association of the PAF1 and RNF20/40 complexes which is a prerequsite for recruitment of UBE2A/B. Interacts with PA2G4. Interacts with FBXL19.

The protein resides in the nucleus. The catalysed reaction is S-ubiquitinyl-[E2 ubiquitin-conjugating enzyme]-L-cysteine + [acceptor protein]-L-lysine = [E2 ubiquitin-conjugating enzyme]-L-cysteine + N(6)-ubiquitinyl-[acceptor protein]-L-lysine.. The protein operates within protein modification; protein ubiquitination. In terms of biological role, component of the RNF20/40 E3 ubiquitin-protein ligase complex that mediates monoubiquitination of 'Lys-120' of histone H2B (H2BK120ub1). H2BK120ub1 gives a specific tag for epigenetic transcriptional activation and is also prerequisite for histone H3 'Lys-4' and 'Lys-79' methylation (H3K4me and H3K79me, respectively). It thereby plays a central role in histone code and gene regulation. The RNF20/40 complex forms a H2B ubiquitin ligase complex in cooperation with the E2 enzyme UBE2A or UBE2B; reports about the cooperation with UBE2E1/UBCH are contradictory. Required for transcriptional activation of Hox genes. Recruited to the MDM2 promoter, probably by being recruited by p53/TP53, and thereby acts as a transcriptional coactivator. Mediates the polyubiquitination of PA2G4 leading to its proteasome-mediated degradation. The sequence is that of E3 ubiquitin-protein ligase BRE1A (Rnf20) from Mus musculus (Mouse).